A 145-amino-acid chain; its full sequence is 3-hydroxyacyl-[acyl-carrier-protein] dehydratase FabZ (145 aa).

Residue H50 is part of the active site.

This sequence belongs to the thioester dehydratase family. FabZ subfamily.

It localises to the cytoplasm. It carries out the reaction a (3R)-hydroxyacyl-[ACP] = a (2E)-enoyl-[ACP] + H2O. In terms of biological role, involved in unsaturated fatty acids biosynthesis. Catalyzes the dehydration of short chain beta-hydroxyacyl-ACPs and long chain saturated and unsaturated beta-hydroxyacyl-ACPs. This chain is 3-hydroxyacyl-[acyl-carrier-protein] dehydratase FabZ, found in Coxiella burnetii (strain CbuK_Q154) (Coxiella burnetii (strain Q154)).